The chain runs to 141 residues: Putative nickel-responsive regulator (141 aa).

Ni(2+) is bound by residues His80, His91, His93, and Cys99.

Belongs to the transcriptional regulatory CopG/NikR family. Ni(2+) serves as cofactor.

Its function is as follows. Transcriptional regulator. The sequence is that of Putative nickel-responsive regulator from Methanococcus maripaludis (strain C5 / ATCC BAA-1333).